Here is a 304-residue protein sequence, read N- to C-terminus: Uricase (304 aa).

Position 2 is an N-acetylalanine (Ala2). An N6-acetyllysine; alternate mark is found at Lys10 and Lys23. An N6-succinyllysine; alternate mark is found at Lys10 and Lys23. The active-site Charge relay system is the Lys23. 2 positions are modified to N6-acetyllysine: Lys27 and Lys36. Residues Ser39 and Ser63 each carry the phosphoserine modification. Thr68 (charge relay system) is an active-site residue. Urate is bound by residues Thr68 and Asp69. An N6-acetyllysine mark is found at Lys118, Lys122, and Lys164. Urate is bound at residue Phe170. N6-acetyllysine occurs at positions 175 and 185. Arg187 lines the urate pocket. Residues Lys221 and Lys228 each carry the N6-acetyllysine; alternate modification. N6-succinyllysine; alternate occurs at positions 221 and 228. Ser232 bears the Phosphoserine mark. Val235, Gln236, and Asn262 together coordinate urate. Residue His264 is the Charge relay system of the active site. Lys278 carries the N6-acetyllysine modification. Tyr289 is modified (phosphotyrosine). The Microbody targeting signal motif lies at 302-304 (SRL).

The protein belongs to the uricase family.

It is found in the peroxisome. The enzyme catalyses urate + O2 + H2O = 5-hydroxyisourate + H2O2. It functions in the pathway purine metabolism; urate degradation; (S)-allantoin from urate: step 1/3. Its function is as follows. Catalyzes the oxidation of uric acid to 5-hydroxyisourate, which is further processed to form (S)-allantoin. The protein is Uricase (UOX) of Macaca fascicularis (Crab-eating macaque).